Here is a 282-residue protein sequence, read N- to C-terminus: Aspergillopepsin-2 (282 aa).

An N-terminal signal peptide occupies residues 1–18 (MKFSTILTGSLFATAALA). 2 consecutive propeptides follow at residues 19 to 59 (APLT…GTTN) and 99 to 109 (GGGYGYWKNKR). Over residues 27 to 39 (ARKEARAAGKRHS) the composition is skewed to basic residues. The segment at 27–46 (ARKEARAAGKRHSNPPYIPG) is disordered. Q110 carries the pyrrolidone carboxylic acid modification. Disulfide bonds link C115–C139 and C127–C210.

The protein belongs to the peptidase G1 family. In terms of assembly, heterodimer of two noncovalently bound light and heavy chains.

It catalyses the reaction Preferential cleavage in B chain of insulin: 3-Asn-|-Gln-4, 13-Gly-|-Ala-14, and 26-Tyr-|-Thr-27.. The protein is Aspergillopepsin-2 of Aspergillus niger.